We begin with the raw amino-acid sequence, 500 residues long: Aspartyl/glutamyl-tRNA(Asn/Gln) amidotransferase subunit B (500 aa).

The protein belongs to the GatB/GatE family. GatB subfamily. In terms of assembly, heterotrimer of A, B and C subunits.

It carries out the reaction L-glutamyl-tRNA(Gln) + L-glutamine + ATP + H2O = L-glutaminyl-tRNA(Gln) + L-glutamate + ADP + phosphate + H(+). The catalysed reaction is L-aspartyl-tRNA(Asn) + L-glutamine + ATP + H2O = L-asparaginyl-tRNA(Asn) + L-glutamate + ADP + phosphate + 2 H(+). Its function is as follows. Allows the formation of correctly charged Asn-tRNA(Asn) or Gln-tRNA(Gln) through the transamidation of misacylated Asp-tRNA(Asn) or Glu-tRNA(Gln) in organisms which lack either or both of asparaginyl-tRNA or glutaminyl-tRNA synthetases. The reaction takes place in the presence of glutamine and ATP through an activated phospho-Asp-tRNA(Asn) or phospho-Glu-tRNA(Gln). This is Aspartyl/glutamyl-tRNA(Asn/Gln) amidotransferase subunit B from Brucella anthropi (strain ATCC 49188 / DSM 6882 / CCUG 24695 / JCM 21032 / LMG 3331 / NBRC 15819 / NCTC 12168 / Alc 37) (Ochrobactrum anthropi).